Reading from the N-terminus, the 1939-residue chain is Myosin-4 (1939 aa).

The region spanning 33 to 82 (DAKTSVFVVDPKESYVKAIVQSREGGKVTAKTEAGATVTVKEDQVFSMNP) is the Myosin N-terminal SH3-like domain. A phosphothreonine mark is found at Thr64 and Thr69. Position 79 is a phosphoserine (Ser79). A Myosin motor domain is found at 86 to 782 (DKIEDMAMMT…LLGTLEEMRD (697 aa)). Lys130 carries the post-translational modification N6,N6,N6-trimethyllysine. 179–186 (GESGAGKT) provides a ligand contact to ATP. Position 389 is a phosphotyrosine (Tyr389). Thr391 carries the phosphothreonine modification. Ser392 is subject to Phosphoserine. At Thr419 the chain carries Phosphothreonine. The residue at position 424 (Tyr424) is a Phosphotyrosine. Ser625 carries the post-translational modification Phosphoserine. An actin-binding region spans residues 659–681 (LNKLMTNLRSTHPHFVRCIIPNE). Residue His757 is modified to Pros-methylhistidine. Positions 761-775 (KFGHTKVFFKAGLLG) are actin-binding. Position 776 is a phosphothreonine (Thr776). The IQ domain occupies 785–814 (LAQLITRTQAICRGFLMRVEFRKMMERRES). Residues 843 to 1939 (LLKSAETEKE…EVHTKVISEE (1097 aa)) adopt a coiled-coil conformation. Phosphoserine occurs at positions 1092, 1162, and 1237. Phosphothreonine is present on Thr1241. Residue Ser1243 is modified to Phosphoserine. Thr1255 bears the Phosphothreonine mark. Ser1261 is modified (phosphoserine). A Phosphothreonine modification is found at Thr1265. Position 1278 is a phosphoserine (Ser1278). Thr1286 is subject to Phosphothreonine. Phosphoserine occurs at positions 1288, 1292, 1303, 1306, and 1413. Tyr1464 carries the post-translational modification Phosphotyrosine. Thr1467 carries the phosphothreonine modification. At Ser1474 the chain carries Phosphoserine. A Phosphotyrosine modification is found at Tyr1492. Ser1495 is modified (phosphoserine). A Phosphothreonine modification is found at Thr1501. Ser1514 carries the post-translational modification Phosphoserine. Thr1517 is modified (phosphothreonine). Residues Ser1542, Ser1547, Ser1554, Ser1574, Ser1600, Ser1603, Ser1714, and Ser1726 each carry the phosphoserine modification. Phosphothreonine occurs at positions 1730 and 1736. Phosphoserine is present on Ser1739.

Belongs to the TRAFAC class myosin-kinesin ATPase superfamily. Myosin family. In terms of assembly, muscle myosin is a hexameric protein that consists of 2 heavy chain subunits (MHC), 2 alkali light chain subunits (MLC) and 2 regulatory light chain subunits (MLC-2).

The protein resides in the cytoplasm. The protein localises to the myofibril. Functionally, muscle contraction. This chain is Myosin-4 (MYH4), found in Homo sapiens (Human).